Consider the following 218-residue polypeptide: Cytochrome b6 (218 aa).

A helical membrane pass occupies residues 35 to 55 (IFYCLGGITLVCFLIQFATGF). Residue Cys-38 participates in heme c binding. Positions 89 and 103 each coordinate heme b. A run of 3 helical transmembrane segments spans residues 93-113 (ASMM…TGGF), 119-139 (LTWV…VTGY), and 189-209 (LHTF…FLMI). His-190 and His-205 together coordinate heme b.

This sequence belongs to the cytochrome b family. PetB subfamily. As to quaternary structure, the 4 large subunits of the cytochrome b6-f complex are cytochrome b6, subunit IV (17 kDa polypeptide, PetD), cytochrome f and the Rieske protein, while the 4 small subunits are PetG, PetL, PetM and PetN. The complex functions as a dimer. It depends on heme b as a cofactor. Requires heme c as cofactor.

The protein localises to the cellular thylakoid membrane. In terms of biological role, component of the cytochrome b6-f complex, which mediates electron transfer between photosystem II (PSII) and photosystem I (PSI), cyclic electron flow around PSI, and state transitions. In Prochlorococcus marinus (strain SARG / CCMP1375 / SS120), this protein is Cytochrome b6.